The following is a 237-amino-acid chain: Phosphoribosylaminoimidazole-succinocarboxamide synthase (237 aa).

The protein belongs to the SAICAR synthetase family.

It catalyses the reaction 5-amino-1-(5-phospho-D-ribosyl)imidazole-4-carboxylate + L-aspartate + ATP = (2S)-2-[5-amino-1-(5-phospho-beta-D-ribosyl)imidazole-4-carboxamido]succinate + ADP + phosphate + 2 H(+). The protein operates within purine metabolism; IMP biosynthesis via de novo pathway; 5-amino-1-(5-phospho-D-ribosyl)imidazole-4-carboxamide from 5-amino-1-(5-phospho-D-ribosyl)imidazole-4-carboxylate: step 1/2. This chain is Phosphoribosylaminoimidazole-succinocarboxamide synthase, found in Yersinia enterocolitica serotype O:8 / biotype 1B (strain NCTC 13174 / 8081).